Reading from the N-terminus, the 479-residue chain is ATP-dependent RNA helicase DbpA (479 aa).

Positions 2 to 30 (SHFKNYQISHDILRALEGLGYTEPTKVQQ) match the Q motif motif. A Helicase ATP-binding domain is found at 33–203 (IPAALERKDL…RQYMQNPEHI (171 aa)). ATP is bound at residue 46 to 53 (SQTGSGKT). Positions 151–154 (DEAD) match the DEAD box motif. Positions 214–374 (NIEHAVIQVR…KIEAPSQEEV (161 aa)) constitute a Helicase C-terminal domain. The involved in 23S rRNA binding stretch occupies residues 404 to 479 (MKLYFNGGKK…KQLKVNKANK (76 aa)).

The protein belongs to the DEAD box helicase family. DbpA subfamily. May interact with RNA helicases CshA and CshB.

It localises to the cytoplasm. The catalysed reaction is ATP + H2O = ADP + phosphate + H(+). Its activity is regulated as follows. ATPase activity is stimulated by interaction with RNA. DEAD-box RNA helicase involved in the assembly of the 50S ribosomal subunit. Has an RNA-dependent ATPase activity, which is specific for 23S rRNA, and a 3' to 5' RNA helicase activity that uses the energy of ATP hydrolysis to destabilize and unwind short rRNA duplexes. In Bacillus subtilis (strain 168), this protein is ATP-dependent RNA helicase DbpA.